A 414-amino-acid chain; its full sequence is Tryptophan synthase beta chain (414 aa).

The disordered stretch occupies residues 1 to 28 (MVSTISRQDQNNNDDLNQPSKEGRFGKY). The span at 8–18 (QDQNNNDDLNQ) shows a compositional bias: low complexity. Lys-108 is subject to N6-(pyridoxal phosphate)lysine.

Belongs to the TrpB family. In terms of assembly, tetramer of two alpha and two beta chains. Pyridoxal 5'-phosphate is required as a cofactor.

The catalysed reaction is (1S,2R)-1-C-(indol-3-yl)glycerol 3-phosphate + L-serine = D-glyceraldehyde 3-phosphate + L-tryptophan + H2O. Its pathway is amino-acid biosynthesis; L-tryptophan biosynthesis; L-tryptophan from chorismate: step 5/5. The beta subunit is responsible for the synthesis of L-tryptophan from indole and L-serine. This is Tryptophan synthase beta chain from Prochlorococcus marinus subsp. pastoris (strain CCMP1986 / NIES-2087 / MED4).